A 393-amino-acid polypeptide reads, in one-letter code: MSLRIGMVAGEPSGDLLAGRIIAGLQARAPGVHCAGIGGPQMAARGFEAWHPMHALTVFGYIDAFKRIPSLLSTYGDVKRRLLAEPPSVFVGIDAPDFNLRLEHQLRQAGTPTVHFVGPSIWAWRYERINKIRAAVSHMLVLFPFEEALYRKEGIPVTYVGHPLAGVIPMQPDRAAARARLGIDADARVLAILPGSRSSEIRLLAPRFLQAAAELVRRDPRLQCVVPMVNPQRRAEFEAIAAQHPVPGLRCVTAAEGQGETPVAWSVMEASNAVLVASGTATLETALYKRPMVISYVLSPWMRRIMAWKSGQQRPYLPWVGLPNVLLRDFAVPELLQDEATPAALAEATWQALTDEAGAARIEARFTALHQDLLRDTPALAAQAILEVADGAA.

Belongs to the LpxB family.

The enzyme catalyses a lipid X + a UDP-2-N,3-O-bis[(3R)-3-hydroxyacyl]-alpha-D-glucosamine = a lipid A disaccharide + UDP + H(+). It participates in bacterial outer membrane biogenesis; LPS lipid A biosynthesis. Its function is as follows. Condensation of UDP-2,3-diacylglucosamine and 2,3-diacylglucosamine-1-phosphate to form lipid A disaccharide, a precursor of lipid A, a phosphorylated glycolipid that anchors the lipopolysaccharide to the outer membrane of the cell. In Bordetella bronchiseptica (strain ATCC BAA-588 / NCTC 13252 / RB50) (Alcaligenes bronchisepticus), this protein is Lipid-A-disaccharide synthase.